The chain runs to 483 residues: Regulatory protein ViaA (483 aa).

The protein belongs to the ViaA family. In terms of assembly, homodimer. Interacts with RavA.

Its subcellular location is the cytoplasm. Functionally, component of the RavA-ViaA chaperone complex, which may act on the membrane to optimize the function of some of the respiratory chains. ViaA stimulates the ATPase activity of RavA. This chain is Regulatory protein ViaA, found in Escherichia coli O6:K15:H31 (strain 536 / UPEC).